Reading from the N-terminus, the 157-residue chain is MLNTTQQSLLVFIGVFFLIFGVDQAIKHAILEGFRYESLMIDIVLVFNKGVAFSLLSFLEGGLKYLQILLILGLFIFLMRQKELFKNHAIEFGMVFGAGVSNVLDRFVHGGVVDYVYYHYGFDFAIFNFADVMIDVGVGVLLLRQFFFKQKQNKIKA.

The next 4 helical transmembrane spans lie at 10–30, 36–56, 58–78, and 84–104; these read LVFIGVFFLIFGVDQAIKHAI, YESLMIDIVLVFNKGVAFSLL, FLEGGLKYLQILLILGLFIFL, and LFKNHAIEFGMVFGAGVSNVL. Residues Asp114 and Asp131 contribute to the active site. A helical transmembrane segment spans residues 122–142; sequence FDFAIFNFADVMIDVGVGVLL.

Belongs to the peptidase A8 family.

It localises to the cell inner membrane. The enzyme catalyses Release of signal peptides from bacterial membrane prolipoproteins. Hydrolyzes -Xaa-Yaa-Zaa-|-(S,diacylglyceryl)Cys-, in which Xaa is hydrophobic (preferably Leu), and Yaa (Ala or Ser) and Zaa (Gly or Ala) have small, neutral side chains.. It participates in protein modification; lipoprotein biosynthesis (signal peptide cleavage). Functionally, this protein specifically catalyzes the removal of signal peptides from prolipoproteins. This Helicobacter pylori (strain P12) protein is Lipoprotein signal peptidase.